Reading from the N-terminus, the 316-residue chain is MDYRVLLYYKYTTIDDPELFATEHLAFCKDLELKGRILVSTEGINGTVSGTVEATDKYMEALKNDARFQGITFKVDEAEGHAFKKMHVRPRQEIVALDLEDDVNPRELTGNYLSPKEFREALLSDDTVVIDARNDYEYDLGHFRGAVRPDITRFRDLPDWIKENKEQFMDKKIVTYCTGGIRCEKFSGYLLKEGFEDVSQLEGGIATYGKDPETKGEFWDGKMYVFDERISVEVNHVDKTVVGKEWFDGTPCERYINCSNPECNKQILVSEENEARYLGACSHECAKHENNRYVKKHNISDEEKAKRLENFKELVK.

In terms of domain architecture, Rhodanese spans 123 to 217 (LSDDTVVIDA…YGKDPETKGE (95 aa)). Cys-177 functions as the Cysteine persulfide intermediate in the catalytic mechanism.

This sequence belongs to the TrhO family.

It catalyses the reaction uridine(34) in tRNA + AH2 + O2 = 5-hydroxyuridine(34) in tRNA + A + H2O. In terms of biological role, catalyzes oxygen-dependent 5-hydroxyuridine (ho5U) modification at position 34 in tRNAs. The polypeptide is tRNA uridine(34) hydroxylase (Staphylococcus saprophyticus subsp. saprophyticus (strain ATCC 15305 / DSM 20229 / NCIMB 8711 / NCTC 7292 / S-41)).